We begin with the raw amino-acid sequence, 294 residues long: Mitochondrial substrate carrier family protein ucpB (294 aa).

Topologically, residues 1–10 are mitochondrial intermembrane; that stretch reads MTSQESIGIK. Solcar repeat units lie at residues 9-93, 101-187, and 197-288; these read IKFL…IKNY, TNLL…IKHM, and DGLQ…LRKV. The chain crosses the membrane as a helical span at residues 11–31; sequence FLFGGLSCMGAAVVSNPVDVL. Over 32–67 the chain is Mitochondrial matrix; that stretch reads KTRFQIHGEGIDSKSLGLVNGTIKIIKNEGISAMYK. The chain crosses the membrane as a helical span at residues 68-88; it reads GLTPSLLREATYSTLRMGGYD. Residues 89-106 lie on the Mitochondrial intermembrane side of the membrane; that stretch reads VIKNYFIDSNGKTNLLSK. Residues 107 to 127 traverse the membrane as a helical segment; the sequence is VTSGALSGALGACITSPTDLI. Topologically, residues 128 to 161 are mitochondrial matrix; it reads KVRMQASSKGVKYDSISSAFKEIIAKEGIKGLWK. A helical transmembrane segment spans residues 162–182; that stretch reads GVGPTTQRAALLTASQIPSYD. The Mitochondrial intermembrane portion of the chain corresponds to 183 to 192; that stretch reads HIKHMILDHG. The chain crosses the membrane as a helical span at residues 193–213; the sequence is IIQVDGLQVHIVSSIFAGLIA. Residues 214-267 lie on the Mitochondrial matrix side of the membrane; sequence SITTSPVDLVKTRIMNQPFDSNGVGLIYKSSYDCFKKTFQSEGISGLYKGFLPN. The chain crosses the membrane as a helical span at residues 268–285; it reads WFRIGPHTIVTFILYEYL. The Mitochondrial intermembrane portion of the chain corresponds to 286–294; the sequence is RKVSGIKPI.

It belongs to the mitochondrial carrier (TC 2.A.29) family.

It localises to the mitochondrion inner membrane. Functionally, mitochondrial solute carriers shuttle metabolites, nucleotides, and cofactors through the mitochondrial inner membrane. The protein is Mitochondrial substrate carrier family protein ucpB (ucpB) of Dictyostelium discoideum (Social amoeba).